Reading from the N-terminus, the 316-residue chain is MHQSEFDPHSKEVVARAPLDPHLKALENEAIHIFREVAGEFDNPVMLYSIGKDSSVLLHLARKAFYPGRVPFPLLHIDTGWKFKEMIAFRDEMAKRYDLDLVVHTNPRGKTEGVTPFSHGSALYTDIMKTEALRQALDAGKYDAAFGGARRDEEASRAKERIYSFRTPDHKWDPRNQRPELWNVYNGMIRRGESVRAFPLSNWTEVDIWRYIQAENIPLVPLYFAEKRPFIERDGMMILAEDERLELLPGEKVQHGSIRFRTLGCFPLTGALRSEARTLDDVIAELEIATVSERQGRAIDRDQSGSMEKKKREGYF.

The segment at R297–F316 is disordered.

It belongs to the PAPS reductase family. CysD subfamily. As to quaternary structure, heterodimer composed of CysD, the smaller subunit, and CysN.

It catalyses the reaction sulfate + ATP + H(+) = adenosine 5'-phosphosulfate + diphosphate. It functions in the pathway sulfur metabolism; hydrogen sulfide biosynthesis; sulfite from sulfate: step 1/3. In terms of biological role, with CysN forms the ATP sulfurylase (ATPS) that catalyzes the adenylation of sulfate producing adenosine 5'-phosphosulfate (APS) and diphosphate, the first enzymatic step in sulfur assimilation pathway. APS synthesis involves the formation of a high-energy phosphoric-sulfuric acid anhydride bond driven by GTP hydrolysis by CysN coupled to ATP hydrolysis by CysD. The protein is Sulfate adenylyltransferase subunit 2 of Allorhizobium ampelinum (strain ATCC BAA-846 / DSM 112012 / S4) (Agrobacterium vitis (strain S4)).